Reading from the N-terminus, the 448-residue chain is Argininosuccinate synthase (448 aa).

ATP contacts are provided by residues 17 to 25 (AFSGGLDTS) and alanine 43. L-citrulline is bound at residue tyrosine 99. Positions 129 and 131 each coordinate ATP. L-aspartate contacts are provided by threonine 131, asparagine 135, and aspartate 136. Asparagine 135 contributes to the L-citrulline binding site. Residue aspartate 136 participates in ATP binding. Arginine 139 and serine 192 together coordinate L-citrulline. ATP is bound at residue aspartate 194. Residues threonine 201, glutamate 203, and glutamate 280 each coordinate L-citrulline.

It belongs to the argininosuccinate synthase family. Type 2 subfamily. As to quaternary structure, homotetramer.

The protein localises to the cytoplasm. It carries out the reaction L-citrulline + L-aspartate + ATP = 2-(N(omega)-L-arginino)succinate + AMP + diphosphate + H(+). The protein operates within amino-acid biosynthesis; L-arginine biosynthesis; L-arginine from L-ornithine and carbamoyl phosphate: step 2/3. The chain is Argininosuccinate synthase from Pectobacterium carotovorum subsp. carotovorum (strain PC1).